We begin with the raw amino-acid sequence, 980 residues long: Valine--tRNA ligase (980 aa).

The 'HIGH' region signature appears at 43-53 (PNVTGTLHMGH). The 'KMSKS' region signature appears at 586–590 (KMSKS). An ATP-binding site is contributed by Lys-589. Positions 914-978 (LVDMDAERTR…QLTGLREQRA (65 aa)) form a coiled coil.

This sequence belongs to the class-I aminoacyl-tRNA synthetase family. ValS type 1 subfamily. As to quaternary structure, monomer.

The protein localises to the cytoplasm. It catalyses the reaction tRNA(Val) + L-valine + ATP = L-valyl-tRNA(Val) + AMP + diphosphate. Its function is as follows. Catalyzes the attachment of valine to tRNA(Val). As ValRS can inadvertently accommodate and process structurally similar amino acids such as threonine, to avoid such errors, it has a 'posttransfer' editing activity that hydrolyzes mischarged Thr-tRNA(Val) in a tRNA-dependent manner. The chain is Valine--tRNA ligase from Xanthomonas euvesicatoria pv. vesicatoria (strain 85-10) (Xanthomonas campestris pv. vesicatoria).